A 515-amino-acid chain; its full sequence is Ecdysteroid UDP-glucosyltransferase (515 aa).

Positions 1–31 are cleaved as a signal peptide; the sequence is MKMIILVVSLHVLRNSAAVRVLCMFPTPSYS.

This sequence belongs to the UDP-glycosyltransferase family.

Its function is as follows. Catalyzes the transfer of glucose from UDP-glucose to ecdysteroids which are insect molting hormones. Expression of egt interferes with normal insect development and block molting. The protein is Ecdysteroid UDP-glucosyltransferase (EGT) of Spodoptera littoralis nuclear polyhedrosis virus (SlNPV).